We begin with the raw amino-acid sequence, 2192 residues long: Non-reducing polyketide synthase 1 (2192 aa).

The tract at residues 5–243 (LLLGDQTADQ…VSIPIYAPYH (239 aa)) is N-terminal acylcarrier protein transacylase domain (SAT). A Ketosynthase family 3 (KS3) domain is found at 374-806 (NDKIAIVGMS…GGNTSLLLED (433 aa)). Residues cysteine 546, histidine 681, and histidine 724 each act as for beta-ketoacyl synthase activity in the active site. Positions 905–1218 (FCFTGQGSQY…ANSMCALFLA (314 aa)) are malonyl-CoA:ACP transacylase (MAT) domain. Serine 993 functions as the For acyl/malonyl transferase activity in the catalytic mechanism. The tract at residues 1293 to 1610 (SCQKIIDEEF…RKVLNTFLPP (318 aa)) is product template (PT) domain. The interval 1295-1430 (QKIIDEEFSA…CTVKFEDINT (136 aa)) is N-terminal hotdog fold. One can recognise a PKS/mFAS DH domain in the interval 1295 to 1605 (QKIIDEEFSA…FQKIPRKVLN (311 aa)). The active-site Proton acceptor; for dehydratase activity is histidine 1327. Residues 1458–1605 (AHVIGRGLAY…FQKIPRKVLN (148 aa)) form a C-terminal hotdog fold region. Catalysis depends on aspartate 1518, which acts as the Proton donor; for dehydratase activity. Residues 1639–1668 (TQAQPAKAVPKQVTVAAPTPKAAPKKADLK) are disordered. The region spanning 1670–1747 (PAGPTIITRV…EMKKFFSQYD (78 aa)) is the Carrier 1 domain. Serine 1707 carries the O-(pantetheine 4'-phosphoryl)serine modification. Residues 1748-1788 (GEVGTPEQDDSDSDSETSGDASTPMSEVGTPMTIPSSAVSE) form a disordered region. Residues 1754–1764 (EQDDSDSDSET) show a composition bias toward acidic residues. The Carrier 2 domain maps to 1798–1875 (APASGEVSIA…DVENALDMRP (78 aa)). O-(pantetheine 4'-phosphoryl)serine is present on serine 1835. The tract at residues 1913–2164 (SKYPAATSVL…SMMKPPHVSI (252 aa)) is thioesterase (TE) domain.

Its function is as follows. Non-reducing polyketide synthase; part of the gene cluster that mediates the biosynthesis of elsinochromes, pigments consisting of at least four interconvertible tautomers (A, B, C and D) that have a core phenolic quinone to which various side chains are attached and which play an important role in fungal pathogenesis. The non-reducing polyketide synthase PKS1 was proposed to iteratively catalyze decarboxylation between acetyl-CoA and malonyl-CoA subunits for polyketide chain elongation. The released polyketide undergoes cyclization to form an aromatic ring, and proceeds via serial modification steps to produce the heptaketide back- bone of elsinochrome. As elsinochrome has a symmetrical structure, two identical heptaketides are fused to form a core 1,2-dihydrobenzo-perylene ring structure, which can then be successively modified to produce the various derivatives of elsinochrome. Some of these reactions may be cooperatively carried out, at least in part, by the products of RDT1, OXR1 and PKS1. PRF1, embedded within the elsinochrome cluster possibly functions to stabilize some of the biosynthetic enzymes required for elsinochrome production. As prefoldin is a hexamer containing 2 a and 4 b subunits, additional prefoldin subunits, whose coding genes may not immediately link to the elsinochrome biosynthetic gene cluster, are required to fulfill the chaperone function. In addition, no methyltransferase-coding gene exists within the biosynthetic gene cluster, even though elsinochrome has four methyl groups at positions C3, C7, C8 and C12. Apparently, the identified gene cluster does not contain the entire entourage of genes responsible for elsinochrome biosynthesis. Once elsinochrome is synthesized, it must be exported outside the fungal cells, which is probably accomplished by the ECT1 transporter, to avoid toxicity. This chain is Non-reducing polyketide synthase 1, found in Elsinoe fawcettii (Citrus scab fungus).